A 163-amino-acid chain; its full sequence is S-ribosylhomocysteine lyase (163 aa).

Fe cation contacts are provided by H54, H58, and C128.

Belongs to the LuxS family. As to quaternary structure, homodimer. Fe cation is required as a cofactor.

It catalyses the reaction S-(5-deoxy-D-ribos-5-yl)-L-homocysteine = (S)-4,5-dihydroxypentane-2,3-dione + L-homocysteine. Functionally, involved in the synthesis of autoinducer 2 (AI-2) which is secreted by bacteria and is used to communicate both the cell density and the metabolic potential of the environment. The regulation of gene expression in response to changes in cell density is called quorum sensing. Catalyzes the transformation of S-ribosylhomocysteine (RHC) to homocysteine (HC) and 4,5-dihydroxy-2,3-pentadione (DPD). The sequence is that of S-ribosylhomocysteine lyase from Wolinella succinogenes (strain ATCC 29543 / DSM 1740 / CCUG 13145 / JCM 31913 / LMG 7466 / NCTC 11488 / FDC 602W) (Vibrio succinogenes).